A 281-amino-acid polypeptide reads, in one-letter code: Nucleotide-binding protein CTN_0898 (281 aa).

ATP is bound at residue G9–T16. D58–S61 lines the GTP pocket.

The protein belongs to the RapZ-like family.

Its function is as follows. Displays ATPase and GTPase activities. This Thermotoga neapolitana (strain ATCC 49049 / DSM 4359 / NBRC 107923 / NS-E) protein is Nucleotide-binding protein CTN_0898.